Here is a 300-residue protein sequence, read N- to C-terminus: D-alanine--D-alanine ligase (300 aa).

Positions 99 to 293 constitute an ATP-grasp domain; that stretch reads KKILKYANIN…FAELLNSIVK (195 aa). Position 126-181 (126-181) interacts with ATP; it reads IEKIGYPVFVKPNSGGSSVATNLVKDKEGIKEAVELALKYDKEVMIENYTKGEEIT. Mg(2+)-binding residues include aspartate 248, glutamate 260, and asparagine 262.

The protein belongs to the D-alanine--D-alanine ligase family. The cofactor is Mg(2+). Mn(2+) is required as a cofactor.

Its subcellular location is the cytoplasm. The enzyme catalyses 2 D-alanine + ATP = D-alanyl-D-alanine + ADP + phosphate + H(+). It functions in the pathway cell wall biogenesis; peptidoglycan biosynthesis. Functionally, cell wall formation. The protein is D-alanine--D-alanine ligase of Clostridium botulinum (strain Okra / Type B1).